A 394-amino-acid polypeptide reads, in one-letter code: Aspergillopepsin-1 (394 aa).

An N-terminal signal peptide occupies residues 1–20 (MVVFSKTAALVLGLSTAVSA). Residues 21-69 (APAPTRKGFTINQIARPANKTRTVNLPGLYARSLAKFGGTVPQSVKEAA) constitute a propeptide, activation peptide. The Peptidase A1 domain maps to 85-391 (YLTPVTVGKS…NSEGPKLGFA (307 aa)). D101 is an active-site residue. O-linked (Man...) serine glycosylation is found at S129 and S304. C319 and C354 are joined by a disulfide.

The protein belongs to the peptidase A1 family. As to quaternary structure, monomer.

The protein resides in the secreted. It catalyses the reaction Hydrolysis of proteins with broad specificity. Generally favors hydrophobic residues in P1 and P1', but also accepts Lys in P1, which leads to activation of trypsinogen. Does not clot milk.. Functionally, secreted aspartic endopeptidase that allows assimilation of proteinaceous substrates. The scissile peptide bond is attacked by a nucleophilic water molecule activated by two aspartic residues in the active site. Shows a broad primary substrate specificity. Favors hydrophobic residues at the P1 and P1' positions, but also accepts a lysine residue in the P1 position, leading to the activation of trypsinogen and chymotrypsinogen A. The chain is Aspergillopepsin-1 (pepA) from Aspergillus phoenicis (Aspergillus saitoi).